A 250-amino-acid chain; its full sequence is 3-deoxy-manno-octulosonate cytidylyltransferase (250 aa).

It belongs to the KdsB family.

The protein localises to the cytoplasm. It catalyses the reaction 3-deoxy-alpha-D-manno-oct-2-ulosonate + CTP = CMP-3-deoxy-beta-D-manno-octulosonate + diphosphate. It functions in the pathway nucleotide-sugar biosynthesis; CMP-3-deoxy-D-manno-octulosonate biosynthesis; CMP-3-deoxy-D-manno-octulosonate from 3-deoxy-D-manno-octulosonate and CTP: step 1/1. Its pathway is bacterial outer membrane biogenesis; lipopolysaccharide biosynthesis. Its function is as follows. Activates KDO (a required 8-carbon sugar) for incorporation into bacterial lipopolysaccharide in Gram-negative bacteria. This is 3-deoxy-manno-octulosonate cytidylyltransferase from Bacteroides thetaiotaomicron (strain ATCC 29148 / DSM 2079 / JCM 5827 / CCUG 10774 / NCTC 10582 / VPI-5482 / E50).